The primary structure comprises 310 residues: Tagatose-6-phosphate kinase (310 aa).

The protein belongs to the carbohydrate kinase PfkB family. LacC subfamily.

The catalysed reaction is D-tagatofuranose 6-phosphate + ATP = D-tagatofuranose 1,6-bisphosphate + ADP + H(+). It functions in the pathway carbohydrate metabolism; D-tagatose 6-phosphate degradation; D-glyceraldehyde 3-phosphate and glycerone phosphate from D-tagatose 6-phosphate: step 1/2. The sequence is that of Tagatose-6-phosphate kinase from Streptococcus agalactiae serotype Ia (strain ATCC 27591 / A909 / CDC SS700).